The sequence spans 187 residues: UPF0340 protein SPJ_0612 (187 aa).

It belongs to the UPF0340 family.

The sequence is that of UPF0340 protein SPJ_0612 from Streptococcus pneumoniae (strain JJA).